The primary structure comprises 452 residues: Transcription factor AP-2-delta (452 aa).

The residue at position 239 (Ser239) is a Phosphoserine; by PKA. Residues 280–410 (RRKAANVTLL…VLSEMLNYLE (131 aa)) are H-S-H (helix-span-helix), dimerization. Residues 416–452 (KNGGAADSGQGHANSEKAPLRKASEAAVKEGKTEKTD) are disordered. A compositionally biased stretch (basic and acidic residues) spans 429 to 452 (NSEKAPLRKASEAAVKEGKTEKTD).

Belongs to the AP-2 family. In terms of assembly, binds DNA as a dimer. Can form homodimers or heterodimers with other AP-2 family members. As to expression, expressed in both embryonic and newborn brain.

It is found in the nucleus. Sequence-specific DNA-binding protein that interacts with inducible viral and cellular enhancer elements to regulate transcription of selected genes. AP-2 factors bind to the consensus sequence 5'-GCCNNNGGC-3' and activate genes involved in a large spectrum of important biological functions including proper eye, face, body wall, limb and neural tube development. They also suppress a number of genes including MCAM/MUC18, C/EBP alpha and MYC. This chain is Transcription factor AP-2-delta (Tfap2d), found in Mus musculus (Mouse).